The following is a 311-amino-acid chain: Probable manganese-dependent inorganic pyrophosphatase (311 aa).

Mn(2+) contacts are provided by H9, D13, D15, D75, H97, and D149.

The protein belongs to the PPase class C family. Mn(2+) is required as a cofactor.

Its subcellular location is the cytoplasm. It catalyses the reaction diphosphate + H2O = 2 phosphate + H(+). The protein is Probable manganese-dependent inorganic pyrophosphatase of Lactobacillus helveticus (strain DPC 4571).